The following is a 286-amino-acid chain: Beta-lactamase SHV-2 (286 aa).

Residues 1–21 (MRYIRLCIISLLATLPLAVHA) form the signal peptide. Catalysis depends on Ser66, which acts as the Acyl-ester intermediate. Cys73 and Cys119 form a disulfide bridge. Glu164 (proton acceptor) is an active-site residue. 230–232 (KTG) serves as a coordination point for substrate.

Belongs to the class-A beta-lactamase family.

It catalyses the reaction a beta-lactam + H2O = a substituted beta-amino acid. In terms of biological role, this enzyme hydrolyzes cefotaxime, ceftazidime and other broad spectrum cephalosporins. This is Beta-lactamase SHV-2 (bla) from Escherichia coli.